We begin with the raw amino-acid sequence, 733 residues long: uncharacterized protein (733 aa).

Residues 174–194 (WAVMILASLRPELFGPIIIAG) traverse the membrane as a helical segment.

The protein resides in the membrane. This is an uncharacterized protein from Rhizobium meliloti (Ensifer meliloti).